Consider the following 197-residue polypeptide: ATP-dependent Clp protease proteolytic subunit 3 (197 aa).

The Nucleophile role is filled by Ser-96. The active site involves His-121.

It belongs to the peptidase S14 family. As to quaternary structure, fourteen ClpP subunits assemble into 2 heptameric rings which stack back to back to give a disk-like structure with a central cavity, resembling the structure of eukaryotic proteasomes.

Its subcellular location is the cytoplasm. The enzyme catalyses Hydrolysis of proteins to small peptides in the presence of ATP and magnesium. alpha-casein is the usual test substrate. In the absence of ATP, only oligopeptides shorter than five residues are hydrolyzed (such as succinyl-Leu-Tyr-|-NHMec, and Leu-Tyr-Leu-|-Tyr-Trp, in which cleavage of the -Tyr-|-Leu- and -Tyr-|-Trp bonds also occurs).. Cleaves peptides in various proteins in a process that requires ATP hydrolysis. Has a chymotrypsin-like activity. Plays a major role in the degradation of misfolded proteins. In Prochlorococcus marinus (strain MIT 9313), this protein is ATP-dependent Clp protease proteolytic subunit 3.